The primary structure comprises 206 residues: Pyrrolidone-carboxylate peptidase (206 aa).

Catalysis depends on residues E78, C141, and H165.

This sequence belongs to the peptidase C15 family. As to quaternary structure, homotetramer.

Its subcellular location is the cytoplasm. The enzyme catalyses Release of an N-terminal pyroglutamyl group from a polypeptide, the second amino acid generally not being Pro.. Its function is as follows. Removes 5-oxoproline from various penultimate amino acid residues except L-proline. This chain is Pyrrolidone-carboxylate peptidase, found in Thermococcus kodakarensis (strain ATCC BAA-918 / JCM 12380 / KOD1) (Pyrococcus kodakaraensis (strain KOD1)).